Consider the following 561-residue polypeptide: SH3 domain-binding protein 2 (561 aa).

The region spanning G26–G130 is the PH domain. Disordered stretches follow at residues V160–S316 and K333–V451. The span at D170–S188 shows a compositional bias: acidic residues. Residues Y174 and Y183 each carry the phosphotyrosine; by SYK modification. The SH3-binding signature appears at P201 to P210. 2 stretches are compositionally biased toward pro residues: residues P202 to R213 and P233 to H242. Residues E252–P266 are compositionally biased toward basic and acidic residues. A Phosphoserine modification is found at S278. Residues R342–A354 are compositionally biased toward pro residues. Phosphoserine occurs at positions 416 and 427. At Y448 the chain carries Phosphotyrosine; by SYK. Positions V457–Y555 constitute an SH2 domain.

In terms of processing, phosphorylated. Phosphorylation at Tyr-448 may stimulate the activity of the LYN kinase. In terms of tissue distribution, expressed in a variety of tissues including lung, liver, skeletal muscle, kidney and pancreas.

Its function is as follows. Binds differentially to the SH3 domains of certain proteins of signal transduction pathways. Binds to phosphatidylinositols; linking the hemopoietic tyrosine kinase fes to the cytoplasmic membrane in a phosphorylation dependent mechanism. In Homo sapiens (Human), this protein is SH3 domain-binding protein 2 (SH3BP2).